A 316-amino-acid chain; its full sequence is Aspartate carbamoyltransferase catalytic subunit (316 aa).

Carbamoyl phosphate-binding residues include Arg-60 and Thr-61. Lys-88 is an L-aspartate binding site. Residues Arg-110, His-138, and Gln-141 each contribute to the carbamoyl phosphate site. L-aspartate-binding residues include Arg-171 and Arg-225. Carbamoyl phosphate-binding residues include Gly-266 and Pro-267.

The protein belongs to the aspartate/ornithine carbamoyltransferase superfamily. ATCase family. As to quaternary structure, heterododecamer (2C3:3R2) of six catalytic PyrB chains organized as two trimers (C3), and six regulatory PyrI chains organized as three dimers (R2).

The catalysed reaction is carbamoyl phosphate + L-aspartate = N-carbamoyl-L-aspartate + phosphate + H(+). It functions in the pathway pyrimidine metabolism; UMP biosynthesis via de novo pathway; (S)-dihydroorotate from bicarbonate: step 2/3. In terms of biological role, catalyzes the condensation of carbamoyl phosphate and aspartate to form carbamoyl aspartate and inorganic phosphate, the committed step in the de novo pyrimidine nucleotide biosynthesis pathway. This chain is Aspartate carbamoyltransferase catalytic subunit, found in Rhizorhabdus wittichii (strain DSM 6014 / CCUG 31198 / JCM 15750 / NBRC 105917 / EY 4224 / RW1) (Sphingomonas wittichii).